A 389-amino-acid polypeptide reads, in one-letter code: Protein DDI1 homolog 1 (389 aa).

Residues 109–132 (SSSSAQSAQRTRRVEQDDEGEKSM) form a disordered region. D261 is a catalytic residue.

It belongs to the DDI1 family. In terms of tissue distribution, expressed in most tissues.

Its subcellular location is the cytoplasm. The protein localises to the nucleus. In terms of biological role, aspartic protease. Required for the cleavage and activation of transcription factors such as isoform a of the transcription factor skn-1, which in turn regulates the expression of proteasomal subunits such as rpt-3. Plays a key role in the degradation of the potassium channel slo-1, perhaps acting directly, in cleaving slo-1 upstream of the ER-associated degradation pathway (ERAD), and also indirectly, via activation of the transcription factor skn-1, which mediates proteasomal homeostasis. The protein is Protein DDI1 homolog 1 of Caenorhabditis elegans.